A 126-amino-acid chain; its full sequence is RxLR effector protein BLR31 (126 aa).

The first 22 residues, methionine 1–alanine 22, serve as a signal peptide directing secretion. Positions arginine 44–arginine 58 match the RxLR-dEER motif.

This sequence belongs to the RxLR effector family.

The protein localises to the secreted. The protein resides in the host cell. Functionally, secreted effector that triggers a hypersensitive response (HR) in 3 Lactuca saligna accessions (CGN05947, CGN05310, CGN05304). This chain is RxLR effector protein BLR31, found in Bremia lactucae (Lettuce downy mildew).